The primary structure comprises 357 residues: DENN domain-containing protein 10 (357 aa).

The uDENN domain maps to 1–140; the sequence is MAAAEVADTQ…TKGICQSEEN (140 aa). A cDENN domain is found at 165–299; that stretch reads QFGMETVILH…PEKSESHVIQ (135 aa). Positions 301–357 constitute a dDENN domain; it reads IALKTREIFTNLAPFSEVSADGEKRVLNLEALKQKRFPPATENFLYHLAAAEQMLKI.

Belongs to the DENND10 family. In terms of assembly, interacts with the coiled-coil heterodimer of CCDC22 and CCDC93; the interaction is direct. Interacts with RAB27A and RAB27B (GDP-bound forms preferentially).

It is found in the late endosome. Functionally, guanine nucleotide exchange factor (GEF) regulating homeostasis of late endocytic pathway, including endosomal positioning, maturation and secretion, possibly through activating Rab proteins such as RAB27A and RAB27B. Promotes the exchange of GDP to GTP, converting inactive GDP-bound RAB27A and RAB27B into their active GTP-bound form. This chain is DENN domain-containing protein 10, found in Homo sapiens (Human).